Reading from the N-terminus, the 119-residue chain is uncharacterized protein (119 aa).

The interval 86 to 119 (KKQRMKMLTEQEEEEEEEEEEPPKPKKKVINRKK) is disordered. The segment covering 95–106 (EQEEEEEEEEEE) has biased composition (acidic residues). Over residues 110-119 (PKKKVINRKK) the composition is skewed to basic residues.

This is an uncharacterized protein from Sputnik virophage.